The chain runs to 420 residues: 3-phosphoshikimate 1-carboxyvinyltransferase (420 aa).

3-phosphoshikimate contacts are provided by Lys26, Ser27, and Arg31. Lys26 is a binding site for phosphoenolpyruvate. 2 residues coordinate phosphoenolpyruvate: Gly97 and Arg125. Residues Ser170, Ser171, Gln172, Asp297, Asn320, and Lys324 each contribute to the 3-phosphoshikimate site. Gln172 is a binding site for phosphoenolpyruvate. Residue Asp297 is the Proton acceptor of the active site. Phosphoenolpyruvate contacts are provided by Arg328, Arg375, and Lys400.

This sequence belongs to the EPSP synthase family. As to quaternary structure, monomer.

The protein localises to the cytoplasm. It carries out the reaction 3-phosphoshikimate + phosphoenolpyruvate = 5-O-(1-carboxyvinyl)-3-phosphoshikimate + phosphate. It functions in the pathway metabolic intermediate biosynthesis; chorismate biosynthesis; chorismate from D-erythrose 4-phosphate and phosphoenolpyruvate: step 6/7. Catalyzes the transfer of the enolpyruvyl moiety of phosphoenolpyruvate (PEP) to the 5-hydroxyl of shikimate-3-phosphate (S3P) to produce enolpyruvyl shikimate-3-phosphate and inorganic phosphate. The polypeptide is 3-phosphoshikimate 1-carboxyvinyltransferase (Rhizobium etli (strain ATCC 51251 / DSM 11541 / JCM 21823 / NBRC 15573 / CFN 42)).